The sequence spans 131 residues: Protein FON2 SPARE1 (131 aa).

Residues 1–22 (MSRRLGAAAAVLLLWLAVLTFA) form the signal peptide. The interval 67-131 (SPSSLTTTDR…VPTGPNPLHH (65 aa)) is disordered. Positions 76-97 (RHHHHHRHHGHHHHRGHDRWNR) are enriched in basic residues.

The protein belongs to the CLV3/ESR signal peptide family. Expressed in all aerial apical meristems, including the floral and inflorescence meristems in the reproductive phase and the shoot apical meristem in the vegetative phase. Also detected in the primordia of lateral organs such as the leaf and the floral organs.

Its subcellular location is the secreted. Involved in the maintenance of the floral meristem and of the shoot apical meristem in the vegetative phase. Suppresses the fon2 mutation and acts independently of FON1. In Oryza sativa subsp. japonica, the protein has a single amino acid substitution at the putative processing site of the signal peptide and is inactive. This Oryza sativa subsp. indica (Rice) protein is Protein FON2 SPARE1 (FOS1).